Consider the following 122-residue polypeptide: uncharacterized protein (122 aa).

The signal sequence occupies residues methionine 1 to cysteine 20.

It localises to the secreted. This is an uncharacterized protein from Homo sapiens (Human).